The chain runs to 188 residues: GMP synthase [glutamine-hydrolyzing] subunit A (188 aa).

One can recognise a Glutamine amidotransferase type-1 domain in the interval 2-188 (KIAVIYFGGQ…FKNFIEACKK (187 aa)). Catalysis depends on C79, which acts as the Nucleophile. Active-site residues include H166 and E168.

Heterodimer composed of a glutamine amidotransferase subunit (A) and a GMP-binding subunit (B).

The enzyme catalyses XMP + L-glutamine + ATP + H2O = GMP + L-glutamate + AMP + diphosphate + 2 H(+). It participates in purine metabolism; GMP biosynthesis; GMP from XMP (L-Gln route): step 1/1. Functionally, catalyzes the synthesis of GMP from XMP. In Sulfurisphaera tokodaii (strain DSM 16993 / JCM 10545 / NBRC 100140 / 7) (Sulfolobus tokodaii), this protein is GMP synthase [glutamine-hydrolyzing] subunit A.